The chain runs to 407 residues: Leucine-rich repeat-containing protein 42 (407 aa).

5 LRR repeats span residues 138-159, 163-184, 191-211, 223-243, and 247-268; these read VLKS…EEIR, SLEC…FKYI, SLVK…QRLT, NLQL…RYLT, and TLQK…KGFF. Residues 360-389 form a disordered region; it reads VQSSPSGETHSTHKSRKRRLSTEEEQSAAP.

It belongs to the LRRC42 family.

The sequence is that of Leucine-rich repeat-containing protein 42 (lrrc42) from Danio rerio (Zebrafish).